The primary structure comprises 130 residues: MYRALTRDIEVTVEPYYLEEQSDPDDSRYVWGYRIIIANHSGLAVRLMTRYWHITDENGQVDEVSGPGVIGEQPLLNPGDTYEYSSGCPLDTPSGVMFGHYSMEAEGGETFDVAIPAFSLDSPGLVRTLN.

Positions 3 to 127 (RALTRDIEVT…FSLDSPGLVR (125 aa)) constitute an ApaG domain.

This is Protein ApaG from Rhizobium meliloti (strain 1021) (Ensifer meliloti).